The chain runs to 567 residues: Synaptotagmin-like protein 1 (567 aa).

The RabBD domain maps to 31–87; that stretch reads LLDLSFLTEEEQEAISDVLKRDAHLRQLEEGRVSKLRASLEDPWQLKILTGDWFQEA. A disordered region spans residues 103-255; the sequence is RASIRRKKSP…VSSLNSSTLS (153 aa). Position 120 is a phosphoserine (serine 120). Acidic residues-rich tracts occupy residues 122-135 and 170-184; these read GEAEAAGEDTIEGE and GQEEEPQDHECELEA. Over residues 208 to 219 the composition is skewed to polar residues; sequence ESQPTPAQSKAT. Serine 220 bears the Phosphoserine mark. Over residues 235–255 the composition is skewed to low complexity; sequence SLDRMLSSSSSVSSLNSSTLS. C2 domains lie at 271–390 and 403–532; these read VRGS…WLPL and SRGL…VPWM.

Monomer. Binds NCF2 and NRXN1. Binds RAB27A that has been activated by GTP-binding via its N-terminus. In terms of tissue distribution, highly expressed in lung. Detected at lower levels in spleen, liver and kidney, and at very low levels in heart, brain and skeletal muscle. Expressed in cytotoxic T-lymphocytes (CTL).

It localises to the endomembrane system. It is found in the cell membrane. Its function is as follows. Binds phosphatidylinositol 3,4,5-trisphosphate. May play a role in vesicle trafficking. Acts as a RAB27A effector protein and may play a role in cytotoxic granule exocytosis in lymphocytes. This is Synaptotagmin-like protein 1 (Sytl1) from Mus musculus (Mouse).